Here is a 107-residue protein sequence, read N- to C-terminus: Metallothionein-1 (107 aa).

A propeptide spanning residues 1–2 is cleaved from the precursor; the sequence is MD.

This sequence belongs to the metallothionein superfamily. Type 7 family.

Its function is as follows. The metallothioneins are involved in the cellular sequestration of toxic metal ions. Binds 12 cadmium ions per molecule. This Tetrahymena pigmentosa protein is Metallothionein-1.